The primary structure comprises 230 residues: 3-dehydroquinate dehydratase (230 aa).

Residues serine 26, 51–53 (EIR), and arginine 84 contribute to the 3-dehydroquinate site. The Proton donor/acceptor role is filled by histidine 127. The active-site Schiff-base intermediate with substrate is lysine 150. 3 residues coordinate 3-dehydroquinate: arginine 190, threonine 209, and glutamine 213.

This sequence belongs to the type-I 3-dehydroquinase family. As to quaternary structure, homodimer.

It carries out the reaction 3-dehydroquinate = 3-dehydroshikimate + H2O. The protein operates within metabolic intermediate biosynthesis; chorismate biosynthesis; chorismate from D-erythrose 4-phosphate and phosphoenolpyruvate: step 3/7. In terms of biological role, involved in the third step of the chorismate pathway, which leads to the biosynthesis of aromatic amino acids. Catalyzes the cis-dehydration of 3-dehydroquinate (DHQ) and introduces the first double bond of the aromatic ring to yield 3-dehydroshikimate. In Thermoplasma volcanium (strain ATCC 51530 / DSM 4299 / JCM 9571 / NBRC 15438 / GSS1), this protein is 3-dehydroquinate dehydratase.